We begin with the raw amino-acid sequence, 227 residues long: MQFSLSAIVLGLAATVYALPPSAPVAGGAGAGNGVGNKGNTDVRFSVPDNLTVKQAQAKCGDQAQLSCCNKAVYAGDTTDINSGILGGTLSNLIGSGSGASGLGLFDQCSKLDLQVPILALLPIQDLVNQKCKQNIACCQNSPSSAVSTPPIIDQKAQLTHHRTPTSLVLASPVLPLAPSSKRLAMFSRIMQAALVITPALWTLVQSSTYAEMWIVIDSEDGKQAFD.

An N-terminal signal peptide occupies residues 1–18 (MQFSLSAIVLGLAATVYA). Asparagine 50 is a glycosylation site (N-linked (GlcNAc...) asparagine). 3 disulfide bridges follow: cysteine 60–cysteine 138, cysteine 68–cysteine 132, and cysteine 69–cysteine 109.

Belongs to the fungal hydrophobin family.

The protein localises to the secreted. It localises to the cell wall. In terms of biological role, aerial growth, conidiation, and dispersal of filamentous fungi in the environment rely upon a capability of their secreting small amphipathic proteins called hydrophobins (HPBs) with low sequence identity. Class I can self-assemble into an outermost layer of rodlet bundles on aerial cell surfaces, conferring cellular hydrophobicity that supports fungal growth, development and dispersal; whereas Class II form highly ordered films at water-air interfaces through intermolecular interactions but contribute nothing to the rodlet structure. In P.expansum, hydrophobins contribute to germination, tolerance to cold stress and mycotoxins patulin and citrinin production. HfbA and HfbB are essential for fungal surface hydrophobicity and HfbA mediates air and water dispersal. The polypeptide is Class I hydrophobin A (Penicillium expansum (Blue mold rot fungus)).